The sequence spans 481 residues: Aspartyl/glutamyl-tRNA(Asn/Gln) amidotransferase subunit B (481 aa).

This sequence belongs to the GatB/GatE family. GatB subfamily. Heterotrimer of A, B and C subunits.

The enzyme catalyses L-glutamyl-tRNA(Gln) + L-glutamine + ATP + H2O = L-glutaminyl-tRNA(Gln) + L-glutamate + ADP + phosphate + H(+). It catalyses the reaction L-aspartyl-tRNA(Asn) + L-glutamine + ATP + H2O = L-asparaginyl-tRNA(Asn) + L-glutamate + ADP + phosphate + 2 H(+). Its function is as follows. Allows the formation of correctly charged Asn-tRNA(Asn) or Gln-tRNA(Gln) through the transamidation of misacylated Asp-tRNA(Asn) or Glu-tRNA(Gln) in organisms which lack either or both of asparaginyl-tRNA or glutaminyl-tRNA synthetases. The reaction takes place in the presence of glutamine and ATP through an activated phospho-Asp-tRNA(Asn) or phospho-Glu-tRNA(Gln). The sequence is that of Aspartyl/glutamyl-tRNA(Asn/Gln) amidotransferase subunit B from Cellvibrio japonicus (strain Ueda107) (Pseudomonas fluorescens subsp. cellulosa).